Here is a 141-residue protein sequence, read N- to C-terminus: Hemoglobin subunit alpha-2 (141 aa).

Positions 1-141 (VLTEDDKNHV…VCKDLVSKYR (141 aa)) constitute a Globin domain. H58 contacts O2. Residue H87 coordinates heme b.

Belongs to the globin family. The major hemoglobin component (HbIII) is a heterotetramer of two alpha-2 chains and two beta-1 chains. Red blood cells.

Functionally, involved in oxygen transport from the lung to the various peripheral tissues. The chain is Hemoglobin subunit alpha-2 from Varanus albigularis (White-throated monitor).